The sequence spans 177 residues: Interleukin-1 receptor antagonist protein (177 aa).

Residues 1–25 (MEIRRRSVRHLISLLLFLFYSETAC) form the signal peptide. Cys-91 and Cys-141 are joined by a disulfide. N-linked (GlcNAc...) asparagine glycosylation is present at Asn-109.

The protein belongs to the IL-1 family.

It is found in the secreted. In terms of biological role, anti-inflammatory antagonist of interleukin-1 family of proinflammatory cytokines such as interleukin-1beta/IL1B and interleukin-1alpha/IL1A. Protects from immune dysregulation and uncontrolled systemic inflammation triggered by IL1 for a range of innate stimulatory agents such as pathogens. The chain is Interleukin-1 receptor antagonist protein (IL1RN) from Equus caballus (Horse).